Reading from the N-terminus, the 312-residue chain is Olfactory receptor 1D5 (312 aa).

Topologically, residues 1–25 are extracellular; it reads MDGDNQSENSQFLLLGISESPEQQQ. Residue Asn-5 is glycosylated (N-linked (GlcNAc...) asparagine). A helical transmembrane segment spans residues 26 to 49; it reads ILFWMFLSMYLVTVLGNVLIILAI. The Cytoplasmic segment spans residues 50–57; sequence SSDSHLHT. A helical transmembrane segment spans residues 58-79; sequence PMYFFLANLSFTDLFFVTNTIP. At 80 to 100 the chain is on the extracellular side; sequence KMLVNFQSQNKAISYAGCLTQ. Cys-97 and Cys-189 form a disulfide bridge. Residues 101-120 traverse the membrane as a helical segment; it reads LYFLVSLVTLDNLILAVMAY. Residues 121-140 are Cytoplasmic-facing; the sequence is DRYVAICCPLHYVTAMSPGL. The helical transmembrane segment at 141–158 threads the bilayer; sequence CVLLLSLCWGLSVLYGLL. Residues 159 to 196 are Extracellular-facing; the sequence is LTLLLTRVTFCGPREIHYLFCDMYILLRLACSNTHIIH. The helical transmembrane segment at 197–220 threads the bilayer; sequence TVLVATGCFIFLTPLGFMTTSYVC. Topologically, residues 221–237 are cytoplasmic; it reads IVRTILQIPSASKKYKA. A helical transmembrane segment spans residues 238–260; that stretch reads FSTCASHLGVVSLFYGTLAMVYL. Residues 261–271 lie on the Extracellular side of the membrane; the sequence is QPLHTYSMKDS. Residues 272–291 form a helical membrane-spanning segment; it reads VATVMYAVVTPMMNPFIYSL. The Cytoplasmic segment spans residues 292 to 312; the sequence is RNKDMHGALGRVLRRLFQRPK.

Belongs to the G-protein coupled receptor 1 family.

Its subcellular location is the cell membrane. Its function is as follows. Odorant receptor. The chain is Olfactory receptor 1D5 (OR1D5) from Pan paniscus (Pygmy chimpanzee).